The sequence spans 429 residues: 3-phosphoshikimate 1-carboxyvinyltransferase (429 aa).

3 residues coordinate 3-phosphoshikimate: Lys-21, Ser-22, and Arg-26. A phosphoenolpyruvate-binding site is contributed by Lys-21. Residues Gly-94 and Arg-122 each coordinate phosphoenolpyruvate. Residues Ser-167, Gln-169, Asp-315, and Lys-342 each contribute to the 3-phosphoshikimate site. Gln-169 is a binding site for phosphoenolpyruvate. Asp-315 serves as the catalytic Proton acceptor. Residues Arg-346 and Arg-388 each contribute to the phosphoenolpyruvate site.

It belongs to the EPSP synthase family. As to quaternary structure, monomer.

Its subcellular location is the cytoplasm. It catalyses the reaction 3-phosphoshikimate + phosphoenolpyruvate = 5-O-(1-carboxyvinyl)-3-phosphoshikimate + phosphate. It functions in the pathway metabolic intermediate biosynthesis; chorismate biosynthesis; chorismate from D-erythrose 4-phosphate and phosphoenolpyruvate: step 6/7. Functionally, catalyzes the transfer of the enolpyruvyl moiety of phosphoenolpyruvate (PEP) to the 5-hydroxyl of shikimate-3-phosphate (S3P) to produce enolpyruvyl shikimate-3-phosphate and inorganic phosphate. The polypeptide is 3-phosphoshikimate 1-carboxyvinyltransferase (Desulforamulus reducens (strain ATCC BAA-1160 / DSM 100696 / MI-1) (Desulfotomaculum reducens)).